The sequence spans 201 residues: MSRYRGPRFKKIRRLGALPGLTSKKPRSASDLRNQSRSGKRSQYRIRLEEKQKLRFHYGLTERQLLRYVRIAGKANGSTGQVLLQLLEMRLDNILFRLGMASTIPGARQLVNHGHILVNGRLVDIPSYRCKPRDIITTKDKQGSRALIQNHMDSSSNAELPKHLTLHSFQYKGVVNQIIDSKWVGLKVNELLIVEYYSRQT.

The interval 16-43 is disordered; that stretch reads GALPGLTSKKPRSASDLRNQSRSGKRSQ. Residues 89 to 169 enclose the S4 RNA-binding domain; sequence MRLDNILFRL…LPKHLTLHSF (81 aa).

Belongs to the universal ribosomal protein uS4 family. As to quaternary structure, part of the 30S ribosomal subunit. Contacts protein S5. The interaction surface between S4 and S5 is involved in control of translational fidelity.

The protein localises to the plastid. It localises to the chloroplast. One of the primary rRNA binding proteins, it binds directly to 16S rRNA where it nucleates assembly of the body of the 30S subunit. Its function is as follows. With S5 and S12 plays an important role in translational accuracy. The polypeptide is Small ribosomal subunit protein uS4c (rps4) (Nymphaea alba (White water-lily)).